Consider the following 186-residue polypeptide: Ribosome-recycling factor (186 aa).

Belongs to the RRF family.

It localises to the cytoplasm. Responsible for the release of ribosomes from messenger RNA at the termination of protein biosynthesis. May increase the efficiency of translation by recycling ribosomes from one round of translation to another. This chain is Ribosome-recycling factor, found in Rickettsia bellii (strain OSU 85-389).